Here is a 115-residue protein sequence, read N- to C-terminus: DNA-binding protein PH1060 (115 aa).

This sequence belongs to the PDCD5 family.

The sequence is that of DNA-binding protein PH1060 from Pyrococcus horikoshii (strain ATCC 700860 / DSM 12428 / JCM 9974 / NBRC 100139 / OT-3).